The primary structure comprises 307 residues: MDYIAEPATDMSHTSDWPLPADSLRLPIPAALLEKLAVHPLSRDLYPTSLGHYRRARDHRMSRERHDEHLLIYCSEGQGLLRVREGEAWREYRVGSGDLLWLPPGMAHDYAADDRQPWTIFWTHLRGDSATWLQHSAGYRDTPLRHWGLQHALLGGFEQLLEVRHSGYRFQHFLLAASRLRSLLCQLPLLRPLREGSLDLDGLHAYMREHLHARLELERLAAFCNLSKFHFVSRYKAITGRTPIQHFLHLKIEYACQLLDSSDQSVARVGQAVGYDDSYYFSRLFSKVMGLSPSAYRQRVRQGEGGA.

Residues 201–299 (DGLHAYMREH…GLSPSAYRQR (99 aa)) enclose the HTH araC/xylS-type domain. 2 consecutive DNA-binding regions (H-T-H motif) follow at residues 218–239 (ERLA…KAIT) and 266–289 (VARV…SKVM).

Regulatory protein for the mmsAB operon. Activates the transcription of the mmsAB genes. The chain is MmsAB operon regulatory protein from Pseudomonas aeruginosa (strain ATCC 15692 / DSM 22644 / CIP 104116 / JCM 14847 / LMG 12228 / 1C / PRS 101 / PAO1).